A 280-amino-acid polypeptide reads, in one-letter code: MASTFRLSISFLTLILFSLWVVEAHTSRKLISIKEKEGQDISHLLKDGEFDDPSLYMYFTLNDLKLGTKLLIYFYKNDLQKLPPLLTRQQADLIPFTKSKLDFLLDHFSITKDSPQGKAIKETLGHCDAKAIEGEHKFCGTSLESLIDLVKKTMGYNVDLKVMTTKVMVPAQNSISYALHNYTFVEAPKELVGIKMLGCHRMPYPYAVYYCHGHKGGSRVFEVNLVTDDGRQRVVGPAVCHMDTSTWDADHVAFKVLKMEPRSAPVCHFFPLDNIVWVTK.

The signal sequence occupies residues 1 to 24 (MASTFRLSISFLTLILFSLWVVEA). The BURP domain maps to 58–280 (YFTLNDLKLG…PLDNIVWVTK (223 aa)).

As to expression, expressed in cotyledons, radicle, floral buds, open flowers, roots and developing seeds, but not in leaves. Highly expressed in the root tips. Detected in young leaves, hypocotyls, stems and mature seed funiculum.

It is found in the protein storage vacuole. The protein localises to the golgi apparatus. It localises to the golgi stack. Its subcellular location is the trans-Golgi network. The protein resides in the prevacuolar compartment. Functionally, associated with the protein storage vacuole formation. The protein is BURP domain protein USPL1 of Arabidopsis thaliana (Mouse-ear cress).